A 320-amino-acid polypeptide reads, in one-letter code: Ferrochelatase (320 aa).

Positions 194 and 275 each coordinate Fe cation.

This sequence belongs to the ferrochelatase family. As to quaternary structure, monomer.

The protein localises to the cytoplasm. It catalyses the reaction heme b + 2 H(+) = protoporphyrin IX + Fe(2+). It participates in porphyrin-containing compound metabolism; protoheme biosynthesis; protoheme from protoporphyrin-IX: step 1/1. Functionally, catalyzes the ferrous insertion into protoporphyrin IX. In Salmonella arizonae (strain ATCC BAA-731 / CDC346-86 / RSK2980), this protein is Ferrochelatase.